We begin with the raw amino-acid sequence, 1070 residues long: TSC22 domain family protein 1 (1070 aa).

The required for interaction with TGFBR1 and promotion of TGF-beta signaling stretch occupies residues 1 to 98 (MHQPPESTAA…SQAQLQAQPL (98 aa)). Disordered stretches follow at residues 1–110 (MHQP…KKSG), 125–289 (ISSN…PASV), 458–487 (VTSERESTSGSSVSSSVSTRSHYTESVGSG), 604–637 (YSQAAPPVQTPLPGAPPPQQLQYGQQQPMVSTQM), and 830–858 (TSQVSSAGPSGMPSAPTNLVPPQNIAQTP). Positions 36-45 (GSASALNAAG) are enriched in low complexity. The span at 58 to 70 (FPPPSLLQPPPPA) shows a compositional bias: pro residues. Residues 84–100 (SLNLLSQAQLQAQPLAP) are compositionally biased toward low complexity. The span at 133–142 (EDTESYDDLD) shows a compositional bias: acidic residues. A compositionally biased stretch (basic residues) spans 216 to 240 (HPHHLHHHHHIHHGHHLQHGHHHPS). The segment covering 241 to 250 (HVAVASASIP) has biased composition (low complexity). Residues 261-271 (KLSTTGSSDSI) show a composition bias toward polar residues. Position 263 is a phosphoserine (Ser-263). Composition is skewed to low complexity over residues 272–289 (TPVAPTSAVSSSGSPASV) and 465–478 (TSGSSVSSSVSTRS). The span at 611-622 (VQTPLPGAPPPQ) shows a compositional bias: pro residues. A compositionally biased stretch (low complexity) spans 830–845 (TSQVSSAGPSGMPSAP). The span at 849–858 (VPPQNIAQTP) shows a compositional bias: polar residues. The interval 1003–1024 (LKEQIKELIEKNSQLEQENNLL) is leucine-zipper. The disordered stretch occupies residues 1034–1070 (AQFQAQLQTGSPPATTQPQGTTQPPAQPASQGSGPTA). Positions 1041–1070 (QTGSPPATTQPQGTTQPPAQPASQGSGPTA) are enriched in low complexity.

This sequence belongs to the TSC-22/Dip/Bun family. Forms homodimers. Forms heterodimers. Component of a complex composed of TSC22D1 (via N-terminus), TGFBR1 and TGFBR2; the interaction between TSC22D1 and TGFBR1 is inhibited by SMAD7 and promoted by TGFB1. Interacts with SMAD7; the interaction requires TGF-beta and the interaction is inhibited by TGFBR1. Interacts with TPT1/fortilin; interaction results in the destabilization of TSC22D1 protein and prevents TSC22D1-mediated apoptosis. Interacts with SMAD4 (via N-terminus). Interacts with ACVRL1/ALK1, ACVR1/ALK2, BMPR1A/ALK3, ACVR1B/ALK4, BMPR1B/ALK6, ACVR2A/ACTRII, and BMPR2. Interacts with SMAD6. Interacts with TFE3; the interaction is enhanced in the presence of TGF-beta. In terms of assembly, forms a heterodimer with TSC22D4/THG1. As to quaternary structure, forms a heterodimer with TSC22D4/THG1. Interacts with histone H1-2. Interacts with GNL3.

Its subcellular location is the cytoplasm. It localises to the nucleus. The protein localises to the cell membrane. It is found in the mitochondrion. Transcriptional repressor. Acts on the C-type natriuretic peptide (CNP) promoter. Acts to promote CASP3-mediated apoptosis. Positively regulates TGF-beta signaling by interacting with SMAD7 which inhibits binding of SMAD7 to TGFBR1, preventing recruitment of SMURF ubiquitin ligases to TGFBR1 and inhibiting SMURF-mediated ubiquitination and degradation of TGFBR1. Contributes to enhancement of TGF-beta signaling by binding to and modulating the transcription activator activity of SMAD4. Promotes TGF-beta-induced transcription of COL1A2; via its interaction with TFE3 at E-boxes in the gene proximal promoter. Plays a role in the repression of hematopoietic precursor cell growth. Promotes IL2 deprivation-induced apoptosis in T-lymphocytes, via repression of TSC22D3/GILZ transcription and activation of the caspase cascade. In terms of biological role, may act to negatively regulate TGFB3 signaling and thereby inhibit cell death in mammary gland cells. Its function is as follows. Positively regulates cell death in response to TGFB3 during mammary gland involution. In Pongo abelii (Sumatran orangutan), this protein is TSC22 domain family protein 1.